The sequence spans 142 residues: MAKKVQAYVKLQVAAGMANPSPPVGPALGQQGVNIMEFCKIFNLQTENFEKGLPIPVIITVYSDRSFTFIIKTPPAAVLLSKAAGIKSGANQPKKEQVGKVTYSQIREIAEKKVADMNSNNIEAISRSILGTALSMGLIVEG.

Belongs to the universal ribosomal protein uL11 family. Part of the ribosomal stalk of the 50S ribosomal subunit. Interacts with L10 and the large rRNA to form the base of the stalk. L10 forms an elongated spine to which L12 dimers bind in a sequential fashion forming a multimeric L10(L12)X complex. One or more lysine residues are methylated.

Forms part of the ribosomal stalk which helps the ribosome interact with GTP-bound translation factors. The polypeptide is Large ribosomal subunit protein uL11 (Baumannia cicadellinicola subsp. Homalodisca coagulata).